The chain runs to 153 residues: Gamma-glutamylaminecyclotransferase (153 aa).

7-10 contacts substrate; it reads YGTL. The Proton acceptor role is filled by Glu82. Residues 130–153 form a disordered region; that stretch reads QLPHHDSYDSEGPHGLRYNPRENR. Over residues 132–153 the composition is skewed to basic and acidic residues; that stretch reads PHHDSYDSEGPHGLRYNPRENR.

The protein belongs to the gamma-glutamylcyclotransferase family. In terms of assembly, monomer.

It catalyses the reaction epsilon-(gamma-L-glutamyl)-L-lysine = 5-oxo-L-proline + L-lysine. Functionally, contributes to degradation of proteins cross-linked by transglutaminases by degrading the cross-link between a lysine and a glutamic acid residue. Catalyzes the formation of 5-oxo-L-proline from L-gamma-glutamyl-L-epsilon-lysine. Inactive with L-gamma-glutamyl-alpha-amino acid substrates such as L-gamma-glutamyl-L-alpha-cysteine and L-gamma-glutamyl-L-alpha-alanine. This Homo sapiens (Human) protein is Gamma-glutamylaminecyclotransferase (GGACT).